Reading from the N-terminus, the 234-residue chain is tRNA (guanine-N(1)-)-methyltransferase (234 aa).

S-adenosyl-L-methionine is bound by residues Gly-112 and Ile-132–Leu-137.

Belongs to the RNA methyltransferase TrmD family. As to quaternary structure, homodimer.

The protein localises to the cytoplasm. The enzyme catalyses guanosine(37) in tRNA + S-adenosyl-L-methionine = N(1)-methylguanosine(37) in tRNA + S-adenosyl-L-homocysteine + H(+). In terms of biological role, specifically methylates guanosine-37 in various tRNAs. This chain is tRNA (guanine-N(1)-)-methyltransferase, found in Campylobacter jejuni subsp. jejuni serotype O:6 (strain 81116 / NCTC 11828).